The following is a 428-amino-acid chain: S-adenosylmethionine synthase (428 aa).

Residue histidine 14 coordinates ATP. Residue aspartate 16 coordinates Mg(2+). Glutamate 42 is a binding site for K(+). Residues glutamate 55 and glutamine 98 each coordinate L-methionine. The tract at residues 98–108 (QSGDINRGVER) is flexible loop. Residues 165 to 167 (DAK), 251 to 252 (KF), aspartate 260, 266 to 267 (RK), alanine 283, and lysine 287 each bind ATP. Aspartate 260 contacts L-methionine. Lysine 291 contacts L-methionine.

It belongs to the AdoMet synthase family. Homotetramer; dimer of dimers. The cofactor is Mg(2+). K(+) is required as a cofactor.

It localises to the cytoplasm. The catalysed reaction is L-methionine + ATP + H2O = S-adenosyl-L-methionine + phosphate + diphosphate. It participates in amino-acid biosynthesis; S-adenosyl-L-methionine biosynthesis; S-adenosyl-L-methionine from L-methionine: step 1/1. In terms of biological role, catalyzes the formation of S-adenosylmethionine (AdoMet) from methionine and ATP. The overall synthetic reaction is composed of two sequential steps, AdoMet formation and the subsequent tripolyphosphate hydrolysis which occurs prior to release of AdoMet from the enzyme. The polypeptide is S-adenosylmethionine synthase (Parabacteroides distasonis (strain ATCC 8503 / DSM 20701 / CIP 104284 / JCM 5825 / NCTC 11152)).